Reading from the N-terminus, the 852-residue chain is DNA mismatch repair protein MutS (852 aa).

602-609 (GPNMSGKS) lines the ATP pocket.

It belongs to the DNA mismatch repair MutS family.

Its function is as follows. This protein is involved in the repair of mismatches in DNA. It is possible that it carries out the mismatch recognition step. This protein has a weak ATPase activity. The protein is DNA mismatch repair protein MutS of Streptococcus thermophilus (strain CNRZ 1066).